A 306-amino-acid polypeptide reads, in one-letter code: Golgi to ER traffic protein 2 (306 aa).

The span at 1-18 (MSEISDAEKRRILREKRQ) shows a compositional bias: basic and acidic residues. The interval 1-100 (MSEISDAEKR…PPGSAEQQNG (100 aa)) is disordered. The Cytoplasmic segment spans residues 1-172 (MSEISDAEKR…VEAHNIAVNK (172 aa)). Residues 34 to 57 (TGQTENSFLSTESPLDSRESTYPA) are compositionally biased toward polar residues. Basic and acidic residues predominate over residues 68–77 (DSTKQMDELL). The span at 78-90 (AKATSKTTSKASS) shows a compositional bias: low complexity. Polar residues predominate over residues 91-100 (PPGSAEQQNG). Residues 173–193 (LKSYTILVKWLFFLLPYLYYI) form a helical membrane-spanning segment. Over 194 to 214 (THSARDPFQHNAVNYVLDRSN) the chain is Lumenal. A helical transmembrane segment spans residues 215-234 (FFTVFTTFEIVALSVYYQLL). Residues 235–281 (MSAEKSHNVNTLDNNSKILKLVSMVPPGLVPIPNLRGKVAQALQYWD) are Cytoplasmic-facing. Residues 282–302 (VVSMYLTDLCFAIVLAGLFQY) form a helical membrane-spanning segment. Over 303-306 (YHSM) the chain is Lumenal.

This sequence belongs to the GET2 family. In terms of assembly, component of the Golgi to ER traffic (GET) complex, which is composed of GET1, GET2 and GET3. Within the complex, GET1 and GET2 form a heterotetramer which is stabilized by phosphatidylinositol binding and which binds to the GET3 homodimer.

The protein localises to the endoplasmic reticulum membrane. It localises to the golgi apparatus membrane. Required for the post-translational delivery of tail-anchored (TA) proteins to the endoplasmic reticulum. Together with GET1, acts as a membrane receptor for soluble GET3, which recognizes and selectively binds the transmembrane domain of TA proteins in the cytosol. The GET complex cooperates with the HDEL receptor ERD2 to mediate the ATP-dependent retrieval of resident ER proteins that contain a C-terminal H-D-E-L retention signal from the Golgi to the ER. The polypeptide is Golgi to ER traffic protein 2 (Lachancea thermotolerans (strain ATCC 56472 / CBS 6340 / NRRL Y-8284) (Yeast)).